Consider the following 474-residue polypeptide: Glycogen synthase (474 aa).

Residue lysine 15 coordinates ADP-alpha-D-glucose.

It belongs to the glycosyltransferase 1 family. Bacterial/plant glycogen synthase subfamily.

The enzyme catalyses [(1-&gt;4)-alpha-D-glucosyl](n) + ADP-alpha-D-glucose = [(1-&gt;4)-alpha-D-glucosyl](n+1) + ADP + H(+). Its pathway is glycan biosynthesis; glycogen biosynthesis. Its function is as follows. Synthesizes alpha-1,4-glucan chains using ADP-glucose. This Chlamydia muridarum (strain MoPn / Nigg) protein is Glycogen synthase.